Consider the following 76-residue polypeptide: Omega-conotoxin-like TxO3 (76 aa).

Positions 1-22 (MKLTCVVIVAVLFLTAWTFVTA) are cleaved as a signal peptide. A propeptide spanning residues 23–52 (VPHSSNALENLYLKAHHEMNNPEASELNKR) is cleaved from the precursor. 3 cysteine pairs are disulfide-bonded: cysteine 53/cysteine 67, cysteine 60/cysteine 71, and cysteine 66/cysteine 75.

The protein belongs to the conotoxin O1 superfamily. As to expression, expressed by the venom duct.

The protein localises to the secreted. In terms of biological role, omega-conotoxins act at presynaptic membranes, they bind and block voltage-gated calcium channels (Cav). This chain is Omega-conotoxin-like TxO3 (TXO3), found in Conus textile (Cloth-of-gold cone).